Consider the following 84-residue polypeptide: Small ribosomal subunit protein bS20 (84 aa).

Residues 1-22 (MPAPTKRERQNRKRFERNRSVR) are disordered. Positions 9–22 (RQNRKRFERNRSVR) are enriched in basic residues.

This sequence belongs to the bacterial ribosomal protein bS20 family.

Functionally, binds directly to 16S ribosomal RNA. In Rubrobacter xylanophilus (strain DSM 9941 / JCM 11954 / NBRC 16129 / PRD-1), this protein is Small ribosomal subunit protein bS20.